A 271-amino-acid chain; its full sequence is MATH domain and coiled-coil domain-containing protein At3g27040 (271 aa).

In terms of domain architecture, MATH spans 7–133; the sequence is DKKFTWVIKN…NGEVKIVAEV (127 aa). Residues 230 to 271 are a coiled coil; sequence KLDWLEKKLKETGKSRLQEIEEDLKDLKVKCADMDALLDFLR.

The protein is MATH domain and coiled-coil domain-containing protein At3g27040 of Arabidopsis thaliana (Mouse-ear cress).